The chain runs to 364 residues: tRNA 2-selenouridine synthase (364 aa).

Residues Leu-14–Trp-137 enclose the Rhodanese domain. Cys-97 (S-selanylcysteine intermediate) is an active-site residue.

This sequence belongs to the SelU family. As to quaternary structure, monomer.

The catalysed reaction is 5-methylaminomethyl-2-thiouridine(34) in tRNA + selenophosphate + (2E)-geranyl diphosphate + H2O + H(+) = 5-methylaminomethyl-2-selenouridine(34) in tRNA + (2E)-thiogeraniol + phosphate + diphosphate. The enzyme catalyses 5-methylaminomethyl-2-thiouridine(34) in tRNA + (2E)-geranyl diphosphate = 5-methylaminomethyl-S-(2E)-geranyl-thiouridine(34) in tRNA + diphosphate. It carries out the reaction 5-methylaminomethyl-S-(2E)-geranyl-thiouridine(34) in tRNA + selenophosphate + H(+) = 5-methylaminomethyl-2-(Se-phospho)selenouridine(34) in tRNA + (2E)-thiogeraniol. It catalyses the reaction 5-methylaminomethyl-2-(Se-phospho)selenouridine(34) in tRNA + H2O = 5-methylaminomethyl-2-selenouridine(34) in tRNA + phosphate. Functionally, involved in the post-transcriptional modification of the uridine at the wobble position (U34) of tRNA(Lys), tRNA(Glu) and tRNA(Gln). Catalyzes the conversion of 2-thiouridine (S2U-RNA) to 2-selenouridine (Se2U-RNA). Acts in a two-step process involving geranylation of 2-thiouridine (S2U) to S-geranyl-2-thiouridine (geS2U) and subsequent selenation of the latter derivative to 2-selenouridine (Se2U) in the tRNA chain. The protein is tRNA 2-selenouridine synthase of Salmonella paratyphi B (strain ATCC BAA-1250 / SPB7).